The primary structure comprises 154 residues: MHCPFCRHPDSRVVDSRETDEGQAIRRRRSCPECGRRFTTVETAVLAVVKRSGVTEPFSREKVIRGVRRSCQGRQVDDDALNLLAQQVEDAVRATGSAEVPSHEVGLAILGPLRELDEVAYLRFASVYRSFSSAEDFEREIQALRAHREVPAQS.

A zinc finger spans residues 3-34 (CPFCRHPDSRVVDSRETDEGQAIRRRRSCPEC). The ATP-cone domain maps to 46–136 (LAVVKRSGVT…VYRSFSSAED (91 aa)).

It belongs to the NrdR family. Zn(2+) serves as cofactor.

Negatively regulates transcription of bacterial ribonucleotide reductase nrd genes and operons by binding to NrdR-boxes. This is Transcriptional repressor NrdR from Mycolicibacterium vanbaalenii (strain DSM 7251 / JCM 13017 / BCRC 16820 / KCTC 9966 / NRRL B-24157 / PYR-1) (Mycobacterium vanbaalenii).